A 435-amino-acid polypeptide reads, in one-letter code: 3-phosphoshikimate 1-carboxyvinyltransferase (435 aa).

Lys-28, Ser-29, and Arg-33 together coordinate 3-phosphoshikimate. Lys-28 serves as a coordination point for phosphoenolpyruvate. The phosphoenolpyruvate site is built by Gly-100 and Arg-128. 3-phosphoshikimate-binding residues include Ser-173, Gln-175, Asp-321, and Lys-348. Gln-175 lines the phosphoenolpyruvate pocket. The Proton acceptor role is filled by Asp-321. The phosphoenolpyruvate site is built by Arg-352 and Arg-394.

It belongs to the EPSP synthase family. As to quaternary structure, monomer.

The protein localises to the cytoplasm. It carries out the reaction 3-phosphoshikimate + phosphoenolpyruvate = 5-O-(1-carboxyvinyl)-3-phosphoshikimate + phosphate. It functions in the pathway metabolic intermediate biosynthesis; chorismate biosynthesis; chorismate from D-erythrose 4-phosphate and phosphoenolpyruvate: step 6/7. Catalyzes the transfer of the enolpyruvyl moiety of phosphoenolpyruvate (PEP) to the 5-hydroxyl of shikimate-3-phosphate (S3P) to produce enolpyruvyl shikimate-3-phosphate and inorganic phosphate. In Desulfitobacterium hafniense (strain DSM 10664 / DCB-2), this protein is 3-phosphoshikimate 1-carboxyvinyltransferase.